A 291-amino-acid polypeptide reads, in one-letter code: Presqualene diphosphate synthase (291 aa).

The segment at 1-23 is disordered; sequence MTSAMKKIQPEAFSEKSSDSQAS.

The protein belongs to the phytoene/squalene synthase family. HpnD subfamily.

The enzyme catalyses 2 (2E,6E)-farnesyl diphosphate = presqualene diphosphate + diphosphate. It participates in secondary metabolite biosynthesis; hopanoid biosynthesis. Involved in the biosynthesis of the hopanoid precursor squalene (SQ) from farnesyl diphosphate (FPP). Catalyzes the first step, the formation of presqualene diphosphate (PSPP) from two molecules of FPP. The chain is Presqualene diphosphate synthase from Zymomonas mobilis subsp. mobilis (strain ATCC 31821 / ZM4 / CP4).